The chain runs to 66 residues: uncharacterized protein (66 aa).

This is an uncharacterized protein from Bacillus subtilis (strain 168).